The sequence spans 333 residues: Glutamyl endopeptidase (333 aa).

A signal peptide spans 1 to 29 (MKGKFLKVSSLFVATLTTATLVSSPAANA). Residues 30-68 (LSSKAMDNHPQQSQSSKQQTPKIQKGGNLKPLEQREHAN) constitute a propeptide that is removed on maturation. A disordered region spans residues 33-61 (KAMDNHPQQSQSSKQQTPKIQKGGNLKPL). A compositionally biased stretch (low complexity) spans 40–54 (QQSQSSKQQTPKIQK). Active-site charge relay system residues include His-119, Asp-161, and Ser-237. The segment at 283–333 (FANDDQPNNPDNPDNPNNPDNPNNPDNPNNPNNPDNPDNGDNNNSDNPDAA) is disordered. The segment covering 286-333 (DDQPNNPDNPDNPNNPDNPNNPDNPNNPNNPDNPDNGDNNNSDNPDAA) has biased composition (low complexity). Tandem repeats lie at residues 289–291 (PNN), 292–294 (PDN), 295–297 (PDN), 298–300 (PNN), 301–303 (PDN), 304–306 (PNN), 307–309 (PDN), 310–312 (PNN), 313–315 (PNN), 316–318 (PDN), and 319–321 (PDN). The tract at residues 289 to 321 (PNNPDNPDNPNNPDNPNNPDNPNNPNNPDNPDN) is 11 X 3 AA repeats of P-[DN]-N.

It belongs to the peptidase S1B family. Post-translationally, proteolytically cleaved by aureolysin (aur). This cleavage leads to the activation of SspA.

Its subcellular location is the secreted. The enzyme catalyses Preferential cleavage: Glu-|-Xaa, Asp-|-Xaa.. Functionally, preferentially cleaves peptide bonds on the carboxyl-terminal side of aspartate and glutamate. Along with other extracellular proteases it is involved in colonization and infection of human tissues. Required for proteolytic maturation of thiol protease SspB and inactivation of SspC, an inhibitor of SspB. It is the most important protease for degradation of fibronectin-binding protein (FnBP) and surface protein A, which are involved in adherence to host cells. May also protect bacteria against host defense mechanism by cleaving the immunoglobulin classes IgG, IgA and IgM. May be involved in the stability of secreted lipases. The sequence is that of Glutamyl endopeptidase (sspA) from Staphylococcus aureus (strain MSSA476).